A 278-amino-acid polypeptide reads, in one-letter code: Single-strand selective monofunctional uracil-DNA glycosylase (278 aa).

Residues methionine 84, phenylalanine 98, and asparagine 163 each coordinate substrate. A DNA-binding region spans residues 173–187 (SGRNLTPADLPAKHR). Substrate is bound at residue histidine 239.

Belongs to the uracil-DNA glycosylase (UDG) superfamily. SMUG1 family.

It localises to the nucleus. Its function is as follows. Recognizes base lesions in the genome and initiates base excision DNA repair. Acts as a monofunctional DNA glycosylase specific for uracil (U) residues in DNA with a preference for single-stranded DNA substrates. The activity is greater toward mismatches (U/G) compared to matches (U/A). Excises uracil (U), 5-formyluracil (fU) and uracil derivatives bearing an oxidized group at C5 [5-hydroxyuracil (hoU) and 5-hydroxymethyluracil (hmU)] in ssDNA and dsDNA, but not analogous cytosine derivatives (5-hydroxycytosine and 5-formylcytosine), nor other oxidized bases. The activity is damage-specific and salt-dependent. The substrate preference is the following: ssDNA &gt; dsDNA (G pair) = dsDNA (A pair) at low salt concentration, and dsDNA (G pair) &gt; dsDNA (A pair) &gt; ssDNA at high salt concentration. The chain is Single-strand selective monofunctional uracil-DNA glycosylase (Smug1) from Rattus norvegicus (Rat).